The sequence spans 126 residues: Aspartate 1-decarboxylase (126 aa).

Ser-25 serves as the catalytic Schiff-base intermediate with substrate; via pyruvic acid. At Ser-25 the chain carries Pyruvic acid (Ser). Substrate is bound at residue Thr-57. Tyr-58 functions as the Proton donor in the catalytic mechanism. 73-75 (GAA) serves as a coordination point for substrate.

It belongs to the PanD family. Heterooctamer of four alpha and four beta subunits. The cofactor is pyruvate. In terms of processing, is synthesized initially as an inactive proenzyme, which is activated by self-cleavage at a specific serine bond to produce a beta-subunit with a hydroxyl group at its C-terminus and an alpha-subunit with a pyruvoyl group at its N-terminus.

It localises to the cytoplasm. It carries out the reaction L-aspartate + H(+) = beta-alanine + CO2. It participates in cofactor biosynthesis; (R)-pantothenate biosynthesis; beta-alanine from L-aspartate: step 1/1. In terms of biological role, catalyzes the pyruvoyl-dependent decarboxylation of aspartate to produce beta-alanine. The protein is Aspartate 1-decarboxylase of Escherichia coli O6:K15:H31 (strain 536 / UPEC).